We begin with the raw amino-acid sequence, 141 residues long: Transcriptional regulator MraZ (141 aa).

SpoVT-AbrB domains lie at 5-47 and 76-119; these read TFNI…KPQD and ANFV…DKKL.

The protein belongs to the MraZ family. In terms of assembly, homooctamer. Forms a ring.

The protein resides in the cytoplasm. It localises to the nucleoid. The chain is Transcriptional regulator MraZ from Mycoplasma pneumoniae (strain ATCC 29342 / M129 / Subtype 1) (Mycoplasmoides pneumoniae).